Consider the following 373-residue polypeptide: Ca(2+)/H(+) antiporter (373 aa).

Transmembrane regions (helical) follow at residues 6–26, 29–49, 61–81, 94–114, 134–154, 162–182, 220–240, 249–269, 291–311, 318–338, and 349–369; these read TIFF…WLHW, VSIF…MGEA, LGGL…AFIA, ITGS…LLGG, MNLA…SNGI, LSVA…LFSM, FWLG…ELLV, SLGL…GNAA, VGST…AGWI, LDFN…ANSI, and GSLL…HPVV.

It belongs to the Ca(2+):cation antiporter (CaCA) (TC 2.A.19) family. Cation/proton exchanger (CAX) subfamily.

It localises to the cell inner membrane. Ca(+)/H(+) antiporter that extrudes calcium in exchange for external protons. Plays an important role in salt tolerance. Does not transport sodium or lithium. The protein is Ca(2+)/H(+) antiporter of Aphanothece halophytica.